Here is a 215-residue protein sequence, read N- to C-terminus: Large ribosomal subunit protein bL25 (215 aa).

The span at 192–202 shows a compositional bias: acidic residues; sequence EEEEVEEEVAE. Residues 192–215 are disordered; sequence EEEEVEEEVAEPEVIKRKEEEEEE. Positions 204–215 are enriched in basic and acidic residues; that stretch reads EVIKRKEEEEEE.

This sequence belongs to the bacterial ribosomal protein bL25 family. CTC subfamily. As to quaternary structure, part of the 50S ribosomal subunit; part of the 5S rRNA/L5/L18/L25 subcomplex. Contacts the 5S rRNA. Binds to the 5S rRNA independently of L5 and L18.

Functionally, this is one of the proteins that binds to the 5S RNA in the ribosome where it forms part of the central protuberance. In Thermotoga neapolitana (strain ATCC 49049 / DSM 4359 / NBRC 107923 / NS-E), this protein is Large ribosomal subunit protein bL25.